We begin with the raw amino-acid sequence, 102 residues long: Acid shock protein (102 aa).

Positions 1-21 (MKKVLALVVAAAMGLSSAAFA) are cleaved as a signal peptide. Over residues 22–41 (AETATTPAPTATTTKAAPAK) the composition is skewed to low complexity. Positions 22–58 (AETATTPAPTATTTKAAPAKTTHHKKQHKAAPAQKAQ) are excised as a propeptide. The disordered stretch occupies residues 22–102 (AETATTPAPT…PAKPAAQPAA (81 aa)). Over residues 80-90 (AAKKHAGKHSH) the composition is skewed to basic residues. Residues 91 to 102 (QQPAKPAAQPAA) show a composition bias toward low complexity.

The protein belongs to the Asr family. Proteolytic processing gives rise to the active protein.

It localises to the periplasm. In terms of biological role, required for growth and/or survival at acidic conditions. In Escherichia coli (strain 55989 / EAEC), this protein is Acid shock protein.